Reading from the N-terminus, the 420-residue chain is UDP-N-acetylglucosamine 1-carboxyvinyltransferase (420 aa).

A phosphoenolpyruvate-binding site is contributed by 22 to 23 (KN). Arg-91 lines the UDP-N-acetyl-alpha-D-glucosamine pocket. Cys-115 acts as the Proton donor in catalysis. A 2-(S-cysteinyl)pyruvic acid O-phosphothioketal modification is found at Cys-115. UDP-N-acetyl-alpha-D-glucosamine-binding positions include 120–124 (RPVDL), 160–163 (KVSV), Asp-305, and Ile-327.

It belongs to the EPSP synthase family. MurA subfamily.

The protein resides in the cytoplasm. The enzyme catalyses phosphoenolpyruvate + UDP-N-acetyl-alpha-D-glucosamine = UDP-N-acetyl-3-O-(1-carboxyvinyl)-alpha-D-glucosamine + phosphate. It participates in cell wall biogenesis; peptidoglycan biosynthesis. Functionally, cell wall formation. Adds enolpyruvyl to UDP-N-acetylglucosamine. This chain is UDP-N-acetylglucosamine 1-carboxyvinyltransferase, found in Erwinia tasmaniensis (strain DSM 17950 / CFBP 7177 / CIP 109463 / NCPPB 4357 / Et1/99).